The primary structure comprises 638 residues: Growth hormone receptor (638 aa).

Residues 1 to 18 (MDLWQLLLTVALAGSSDA) form the signal peptide. Over 19–264 (FSGSEATPAT…SPFTCEEDFR (246 aa)) the chain is Extracellular. Positions 30 to 51 (GRASESVQRVHPGLGTNSSGKP) are disordered. N-linked (GlcNAc...) asparagine glycosylation occurs at N46. 2 disulfide bridges follow: C56–C66 and C101–C112. N-linked (GlcNAc...) asparagine glycosylation is present at N115. A disulfide bond links C126 and C140. In terms of domain architecture, Fibronectin type-III spans 151-254 (PPIGLNWTLL…EVLYVTLPQM (104 aa)). N-linked (GlcNAc...) asparagine glycosylation is found at N156, N161, and N200. The WSXWS motif signature appears at 240–244 (YGEFS). Residues 260 to 262 (EED) are required for ADAM17-mediated proteolysis. A helical transmembrane segment spans residues 265–288 (FPWFLIIIFGIFGLTVMLFVFIFS). The Cytoplasmic portion of the chain corresponds to 289–638 (KQQRIKMLIL…STDQLNKILP (350 aa)). The required for JAK2 binding stretch occupies residues 294-379 (KMLILPPVPV…HQKSLSVLAA (86 aa)). A Box 1 motif motif is present at residues 297–305 (ILPPVPVPK). Positions 340-349 (DSWVEFIELD) match the UbE motif motif. S341 is modified (phosphoserine). Residue Y487 is modified to Phosphotyrosine. The interval 573–592 (TTTAERSGTAEDAPGSEMPV) is disordered. The residue at position 595 (Y595) is a Phosphotyrosine.

Belongs to the type I cytokine receptor family. Type 1 subfamily. As to quaternary structure, on growth hormone (GH) binding, forms homodimers and binds JAK2 via a box 1-containing domain. Post-translationally, the soluble form (GHBP) is produced by phorbol ester-promoted proteolytic cleavage at the cell surface (shedding) by ADAM17/TACE. Shedding is inhibited by growth hormone (GH) binding to the receptor probably due to a conformational change in GHR rendering the receptor inaccessible to ADAM17. In terms of processing, on GH binding, phosphorylated on tyrosine residues in the cytoplasmic domain by JAK2. Ubiquitinated by the ECS(SOCS2) complex following ligand-binding and phosphorylation by JAK2, leading to its degradation by the proteasome. Regulation by the ECS(SOCS2) complex acts as a negative feedback loop of growth hormone receptor signaling. Ubiquitination is not sufficient for GHR internalization.

Its subcellular location is the cell membrane. It localises to the secreted. Functionally, receptor for pituitary gland growth hormone involved in regulating postnatal body growth. On ligand binding, couples to, and activates the JAK2/STAT5 pathway. Its function is as follows. The soluble form acts as a reservoir of growth hormone in plasma and may be a modulator/inhibitor of GH signaling. The protein is Growth hormone receptor of Oryctolagus cuniculus (Rabbit).